Here is a 132-residue protein sequence, read N- to C-terminus: Phosphoribosyl-AMP cyclohydrolase (132 aa).

A Mg(2+)-binding site is contributed by aspartate 85. Residue cysteine 86 coordinates Zn(2+). Mg(2+) is bound by residues aspartate 87 and aspartate 89. Zn(2+) contacts are provided by cysteine 102 and cysteine 109.

The protein belongs to the PRA-CH family. Homodimer. Mg(2+) serves as cofactor. Zn(2+) is required as a cofactor.

It is found in the cytoplasm. The catalysed reaction is 1-(5-phospho-beta-D-ribosyl)-5'-AMP + H2O = 1-(5-phospho-beta-D-ribosyl)-5-[(5-phospho-beta-D-ribosylamino)methylideneamino]imidazole-4-carboxamide. It functions in the pathway amino-acid biosynthesis; L-histidine biosynthesis; L-histidine from 5-phospho-alpha-D-ribose 1-diphosphate: step 3/9. Its function is as follows. Catalyzes the hydrolysis of the adenine ring of phosphoribosyl-AMP. The polypeptide is Phosphoribosyl-AMP cyclohydrolase (Frankia alni (strain DSM 45986 / CECT 9034 / ACN14a)).